We begin with the raw amino-acid sequence, 1317 residues long: Clustered mitochondria protein homolog (1317 aa).

A Clu domain is found at 382 to 626; sequence DITRSQESYL…RVTPLDVTWQ (245 aa). Residues 669-689 are compositionally biased toward basic and acidic residues; it reads KAQEEAANKEQSSEVTESKEQ. Disordered stretches follow at residues 669–700 and 939–966; these read KAQE…EALD and ANGV…PSRA. TPR repeat units lie at residues 1040-1073, 1082-1115, and 1124-1157; these read AKLY…TERT, ILAY…WKII, and ITTM…CESL. Disordered stretches follow at residues 1252–1273 and 1288–1317; these read VQPQ…ANAS and GGDA…KSSA.

The protein belongs to the CLU family. May associate with the eukaryotic translation initiation factor 3 (eIF-3) complex.

The protein localises to the cytoplasm. Functionally, mRNA-binding protein involved in proper cytoplasmic distribution of mitochondria. The protein is Clustered mitochondria protein homolog of Neosartorya fischeri (strain ATCC 1020 / DSM 3700 / CBS 544.65 / FGSC A1164 / JCM 1740 / NRRL 181 / WB 181) (Aspergillus fischerianus).